We begin with the raw amino-acid sequence, 486 residues long: Glycogen synthase (486 aa).

K15 contributes to the ADP-alpha-D-glucose binding site.

This sequence belongs to the glycosyltransferase 1 family. Bacterial/plant glycogen synthase subfamily.

It catalyses the reaction [(1-&gt;4)-alpha-D-glucosyl](n) + ADP-alpha-D-glucose = [(1-&gt;4)-alpha-D-glucosyl](n+1) + ADP + H(+). The protein operates within glycan biosynthesis; glycogen biosynthesis. Synthesizes alpha-1,4-glucan chains using ADP-glucose. The chain is Glycogen synthase from Thermotoga maritima (strain ATCC 43589 / DSM 3109 / JCM 10099 / NBRC 100826 / MSB8).